The chain runs to 232 residues: 2-C-methyl-D-erythritol 4-phosphate cytidylyltransferase (232 aa).

It belongs to the IspD/TarI cytidylyltransferase family. IspD subfamily.

It carries out the reaction 2-C-methyl-D-erythritol 4-phosphate + CTP + H(+) = 4-CDP-2-C-methyl-D-erythritol + diphosphate. The protein operates within isoprenoid biosynthesis; isopentenyl diphosphate biosynthesis via DXP pathway; isopentenyl diphosphate from 1-deoxy-D-xylulose 5-phosphate: step 2/6. In terms of biological role, catalyzes the formation of 4-diphosphocytidyl-2-C-methyl-D-erythritol from CTP and 2-C-methyl-D-erythritol 4-phosphate (MEP). The chain is 2-C-methyl-D-erythritol 4-phosphate cytidylyltransferase from Nitrosospira multiformis (strain ATCC 25196 / NCIMB 11849 / C 71).